We begin with the raw amino-acid sequence, 78 residues long: Sec-independent protein translocase protein TatA (78 aa).

A helical transmembrane segment spans residues 1–21; that stretch reads MGSLSIWHWIVVVAVILLLFG. Over residues 43 to 55 the composition is skewed to basic and acidic residues; sequence MKDDEKTAEKPEP. The disordered stretch occupies residues 43 to 78; the sequence is MKDDEKTAEKPEPVKTINHNADGSGAARSDTGSKVI.

It belongs to the TatA/E family. As to quaternary structure, the Tat system comprises two distinct complexes: a TatABC complex, containing multiple copies of TatA, TatB and TatC subunits, and a separate TatA complex, containing only TatA subunits. Substrates initially bind to the TatABC complex, which probably triggers association of the separate TatA complex to form the active translocon.

The protein resides in the cell inner membrane. Part of the twin-arginine translocation (Tat) system that transports large folded proteins containing a characteristic twin-arginine motif in their signal peptide across membranes. TatA could form the protein-conducting channel of the Tat system. This Nitrobacter winogradskyi (strain ATCC 25391 / DSM 10237 / CIP 104748 / NCIMB 11846 / Nb-255) protein is Sec-independent protein translocase protein TatA.